A 355-amino-acid chain; its full sequence is Putative GPI-anchor transamidase (355 aa).

The first 24 residues, 1–24 (MFNIMLVKFVVIFALILASCRVEA), serve as a signal peptide directing secretion. Residues His165 and Cys207 contribute to the active site.

It belongs to the peptidase C13 family.

It functions in the pathway glycolipid biosynthesis; glycosylphosphatidylinositol-anchor biosynthesis. Its function is as follows. Mediates GPI anchoring in the endoplasmic reticulum, by replacing a protein's C-terminal GPI attachment signal peptide with a pre-assembled GPI. During this transamidation reaction, the GPI transamidase forms a carbonyl intermediate with the substrate protein. In Drosophila melanogaster (Fruit fly), this protein is Putative GPI-anchor transamidase.